Reading from the N-terminus, the 157-residue chain is Endoribonuclease YbeY (157 aa).

Histidine 114, histidine 118, and histidine 124 together coordinate Zn(2+).

The protein belongs to the endoribonuclease YbeY family. Zn(2+) is required as a cofactor.

It is found in the cytoplasm. Its function is as follows. Single strand-specific metallo-endoribonuclease involved in late-stage 70S ribosome quality control and in maturation of the 3' terminus of the 16S rRNA. The sequence is that of Endoribonuclease YbeY from Yersinia pseudotuberculosis serotype O:3 (strain YPIII).